The chain runs to 546 residues: Amidophosphoribosyltransferase (546 aa).

The segment covering 1–26 has biased composition (low complexity); the sequence is MSAPQQQQQSQQKQQQHVRVVEQQQV. The interval 1 to 39 is disordered; sequence MSAPQQQQQSQQKQQQHVRVVEQQQVEPAEAVTSSMESE. A propeptide spanning residues 1-53 is cleaved from the precursor; sequence MSAPQQQQQSQQKQQQHVRVVEQQQVEPAEAVTSSMESESISASKELTGLTHE. Residue cysteine 54 is the Nucleophile of the active site. Residues 54-302 enclose the Glutamine amidotransferase type-2 domain; the sequence is CGVFGAIACG…PGEIVELSRS (249 aa). At serine 113 the chain carries Phosphoserine. At threonine 114 the chain carries Phosphothreonine. Serine 120 carries the post-translational modification Phosphoserine. Position 321 (cysteine 321) interacts with [4Fe-4S] cluster. Residues serine 368, aspartate 430, and aspartate 431 each contribute to the Mg(2+) site. 3 residues coordinate [4Fe-4S] cluster: cysteine 467, cysteine 528, and cysteine 531.

It in the C-terminal section; belongs to the purine/pyrimidine phosphoribosyltransferase family. Mg(2+) serves as cofactor. Requires [4Fe-4S] cluster as cofactor.

The catalysed reaction is 5-phospho-beta-D-ribosylamine + L-glutamate + diphosphate = 5-phospho-alpha-D-ribose 1-diphosphate + L-glutamine + H2O. The protein operates within purine metabolism; IMP biosynthesis via de novo pathway; N(1)-(5-phospho-D-ribosyl)glycinamide from 5-phospho-alpha-D-ribose 1-diphosphate: step 1/2. In terms of biological role, involved in the first step (and regulatory point) of the de novo biosynthesis of purine nucleotides, where it catalyzes the transfer of glutamine amide to 5-phospho-alpha-D-ribose 1-diphosphate. The polypeptide is Amidophosphoribosyltransferase (Prat) (Drosophila melanogaster (Fruit fly)).